The chain runs to 317 residues: Nuclear distribution protein nudE homolog (317 aa).

The stretch at 29-180 (TDVKQEYDEF…LKQELNVKSR (152 aa)) forms a coiled coil. The segment at 186-205 (NGTSVPTANDTNTVNSSMNS) is disordered.

The protein belongs to the nudE family.

The protein resides in the cytoplasm. Its subcellular location is the cytoskeleton. The protein localises to the microtubule organizing center. It localises to the centrosome. It is found in the spindle. Functionally, chaperone protein with functions in nuclear localization. Required for centrosome duplication and formation and function of the mitotic spindle. In postmitotic neurons, acts with nudC downstream of dar1 to ensure correct positioning of the nuclei in primary dendrites and as a consequence, is required for determining multipolar neuron morphology. This Drosophila melanogaster (Fruit fly) protein is Nuclear distribution protein nudE homolog.